A 268-amino-acid polypeptide reads, in one-letter code: MAVVTLKQLLEAGVHFGHQTRRWNPKMKPFIYAERNGIYIIDLQKTYEQLEAAYSFVRDASKEGKTVLFVGTKRQAQEPIREEAERAGMPYVNQRWIGGFLTNFRTIRTRIKKYKELLALREQGYIESLDYKEQKRVMRELEKLDKYYSGVKDMDTLPDILFVVDTKKEEAAIREAKKIGIPVVAMIDTNCDPDLVDYPIPANDDAVRAIKLITSKIADAILEGREGRQGIVSSEGQQASMEEIAEELEAIDETEKYLDLIDEEKEEE.

It belongs to the universal ribosomal protein uS2 family.

The chain is Small ribosomal subunit protein uS2 from Coprothermobacter proteolyticus (strain ATCC 35245 / DSM 5265 / OCM 4 / BT).